We begin with the raw amino-acid sequence, 497 residues long: MSQAGNSPLYAAIDLGSNSFHMLVVRHIDGSVQTMAKIKRKVRLAAGLDEHNALSKEAMQRGWDCLSLFAERLQDIPAEHIRIVGTATLRTATNVDLFLQKANQILGHPIEVISGEEEAATIYKGVAHTSGGSGRRLVVDIGGASTELIIGEGFEAKALTSLKMGCVTWLENFFKDRQLSARNFEAAIEGAKQTLLPILEQYKSLGWDVCVGASGTVQALQEIMLAQGMDEVITHAKLKRLQKQAMLADHLEELEIEGLTLERALVFPSGLSILIAIFELLEIDAMTLAGGALREGLAYEMMSELRQDDIRARTIGSIQSRYQLDSQYGQQVANLALKLLQQVGDVMWIPEPQGAMLLETTAKLHEIGLTIDFKKGGEHSAYLMQHLDLPGFTRAQKFLMGEIARRYREGLTSLPEQHALSGNSGKRLLRLLRLAVILSHRRQPSLEPEVTLSAEGDKLTLAIDAQWLENNPLTAAELELEANRQTDIGWPLVIESR.

Belongs to the GppA/Ppx family. GppA subfamily.

The catalysed reaction is guanosine 3'-diphosphate 5'-triphosphate + H2O = guanosine 3',5'-bis(diphosphate) + phosphate + H(+). It functions in the pathway purine metabolism; ppGpp biosynthesis; ppGpp from GTP: step 2/2. Its function is as follows. Catalyzes the conversion of pppGpp to ppGpp. Guanosine pentaphosphate (pppGpp) is a cytoplasmic signaling molecule which together with ppGpp controls the 'stringent response', an adaptive process that allows bacteria to respond to amino acid starvation, resulting in the coordinated regulation of numerous cellular activities. The sequence is that of Guanosine-5'-triphosphate,3'-diphosphate pyrophosphatase from Vibrio vulnificus (strain YJ016).